We begin with the raw amino-acid sequence, 285 residues long: Glutamate racemase (285 aa).

Substrate contacts are provided by residues Asp28–Ser29 and Tyr60–Gly61. Residue Cys92 is the Proton donor/acceptor of the active site. Residue Asn93–Thr94 coordinates substrate. Cys204 acts as the Proton donor/acceptor in catalysis. A substrate-binding site is contributed by Thr205–His206.

It belongs to the aspartate/glutamate racemases family.

The enzyme catalyses L-glutamate = D-glutamate. Its pathway is cell wall biogenesis; peptidoglycan biosynthesis. Its function is as follows. Provides the (R)-glutamate required for cell wall biosynthesis. The sequence is that of Glutamate racemase from Shigella flexneri serotype 5b (strain 8401).